The chain runs to 262 residues: R3H domain-containing protein 4 (262 aa).

Disordered regions lie at residues 1–27 and 132–155; these read MVALDNSEGGPEATPSGETRLSLPGCL and YLEDESQGKRRRGPGRGEDRRRED. A compositionally biased stretch (basic and acidic residues) spans 146 to 155; the sequence is GRGEDRRRED. Residues 182–245 enclose the R3H domain; that stretch reads METLESWEER…RRQMKVSNRH (64 aa).

It is found in the nucleus. The chain is R3H domain-containing protein 4 (R3hdm4) from Mus musculus (Mouse).